Here is a 286-residue protein sequence, read N- to C-terminus: Bifunctional protein FolD (286 aa).

NADP(+)-binding positions include 165-167, Ser-190, and Val-231; that span reads GRS.

It belongs to the tetrahydrofolate dehydrogenase/cyclohydrolase family. In terms of assembly, homodimer.

The enzyme catalyses (6R)-5,10-methylene-5,6,7,8-tetrahydrofolate + NADP(+) = (6R)-5,10-methenyltetrahydrofolate + NADPH. The catalysed reaction is (6R)-5,10-methenyltetrahydrofolate + H2O = (6R)-10-formyltetrahydrofolate + H(+). Its pathway is one-carbon metabolism; tetrahydrofolate interconversion. Functionally, catalyzes the oxidation of 5,10-methylenetetrahydrofolate to 5,10-methenyltetrahydrofolate and then the hydrolysis of 5,10-methenyltetrahydrofolate to 10-formyltetrahydrofolate. The protein is Bifunctional protein FolD of Bacillus cereus (strain ATCC 10987 / NRS 248).